The primary structure comprises 353 residues: DNA integrity scanning protein DisA (353 aa).

The region spanning 6 to 144 is the DAC domain; it reads DKELMNILKI…GGIKYVLRDS (139 aa). Residues Gly73, Leu91, and 104–108 each bind ATP; that span reads TRHRT.

It belongs to the DisA family. In terms of assembly, homooctamer. Mg(2+) is required as a cofactor.

The catalysed reaction is 2 ATP = 3',3'-c-di-AMP + 2 diphosphate. In terms of biological role, participates in a DNA-damage check-point that is active prior to asymmetric division when DNA is damaged. DisA forms globular foci that rapidly scan along the chromosomes during sporulation, searching for lesions. When a lesion is present, DisA pauses at the lesion site. This triggers a cellular response that culminates in a temporary block in sporulation initiation. Functionally, also has diadenylate cyclase activity, catalyzing the condensation of 2 ATP molecules into cyclic di-AMP (c-di-AMP). c-di-AMP acts as a signaling molecule that couples DNA integrity with progression of sporulation. The rise in c-di-AMP level generated by DisA while scanning the chromosome, operates as a positive signal that advances sporulation; upon encountering a lesion, the DisA focus arrests at the damaged site and halts c-di-AMP synthesis. This Clostridium botulinum (strain Kyoto / Type A2) protein is DNA integrity scanning protein DisA.